Consider the following 115-residue polypeptide: U3-lycotoxin-Ls1b (115 aa).

A signal peptide spans methionine 1–alanine 20. Residues glutamate 21 to arginine 44 constitute a propeptide that is removed on maturation. Disulfide bonds link cysteine 48–cysteine 63, cysteine 55–cysteine 72, cysteine 62–cysteine 87, and cysteine 74–cysteine 85.

Belongs to the neurotoxin 19 (CSTX) family. 01 subfamily. Expressed by the venom gland.

It localises to the secreted. The protein is U3-lycotoxin-Ls1b of Lycosa singoriensis (Wolf spider).